A 338-amino-acid polypeptide reads, in one-letter code: DNA-directed RNA polymerase subunit alpha (338 aa).

The alpha N-terminal domain (alpha-NTD) stretch occupies residues 1-230; sequence MRKITTSAYM…QQMSVFKGIL (230 aa). Positions 247-338 are alpha C-terminal domain (alpha-CTD); the sequence is FSKLLSSVED…ELKSQMSAKE (92 aa).

This sequence belongs to the RNA polymerase alpha chain family. As to quaternary structure, homodimer. The RNAP catalytic core consists of 2 alpha, 1 beta, 1 beta' and 1 omega subunit. When a sigma factor is associated with the core the holoenzyme is formed, which can initiate transcription.

It catalyses the reaction RNA(n) + a ribonucleoside 5'-triphosphate = RNA(n+1) + diphosphate. In terms of biological role, DNA-dependent RNA polymerase catalyzes the transcription of DNA into RNA using the four ribonucleoside triphosphates as substrates. The chain is DNA-directed RNA polymerase subunit alpha from Campylobacter concisus (strain 13826).